We begin with the raw amino-acid sequence, 123 residues long: UPF0102 protein PSPPH_4120 (123 aa).

Belongs to the UPF0102 family.

The protein is UPF0102 protein PSPPH_4120 of Pseudomonas savastanoi pv. phaseolicola (strain 1448A / Race 6) (Pseudomonas syringae pv. phaseolicola (strain 1448A / Race 6)).